The chain runs to 186 residues: Large ribosomal subunit protein eL18B (186 aa).

The residue at position 50 (lysine 50) is an N6,N6,N6-trimethyllysine. Lysine 116 participates in a covalent cross-link: Glycyl lysine isopeptide (Lys-Gly) (interchain with G-Cter in ubiquitin).

This sequence belongs to the eukaryotic ribosomal protein eL18 family. Component of the large ribosomal subunit (LSU). Mature yeast ribosomes consist of a small (40S) and a large (60S) subunit. The 40S small subunit contains 1 molecule of ribosomal RNA (18S rRNA) and 33 different proteins (encoded by 57 genes). The large 60S subunit contains 3 rRNA molecules (25S, 5.8S and 5S rRNA) and 46 different proteins (encoded by 81 genes). eL18 interacts with NAP1.

Its subcellular location is the cytoplasm. Component of the ribosome, a large ribonucleoprotein complex responsible for the synthesis of proteins in the cell. The small ribosomal subunit (SSU) binds messenger RNAs (mRNAs) and translates the encoded message by selecting cognate aminoacyl-transfer RNA (tRNA) molecules. The large subunit (LSU) contains the ribosomal catalytic site termed the peptidyl transferase center (PTC), which catalyzes the formation of peptide bonds, thereby polymerizing the amino acids delivered by tRNAs into a polypeptide chain. The nascent polypeptides leave the ribosome through a tunnel in the LSU and interact with protein factors that function in enzymatic processing, targeting, and the membrane insertion of nascent chains at the exit of the ribosomal tunnel. The polypeptide is Large ribosomal subunit protein eL18B (Saccharomyces cerevisiae (strain ATCC 204508 / S288c) (Baker's yeast)).